The following is a 253-amino-acid chain: 5-oxoprolinase subunit A (253 aa).

It belongs to the LamB/PxpA family. Forms a complex composed of PxpA, PxpB and PxpC.

The enzyme catalyses 5-oxo-L-proline + ATP + 2 H2O = L-glutamate + ADP + phosphate + H(+). Functionally, catalyzes the cleavage of 5-oxoproline to form L-glutamate coupled to the hydrolysis of ATP to ADP and inorganic phosphate. This chain is 5-oxoprolinase subunit A, found in Chloroflexus aurantiacus (strain ATCC 29364 / DSM 637 / Y-400-fl).